The following is a 163-amino-acid chain: Ribonuclease P protein component 4 (163 aa).

Positions 66, 69, 96, and 99 each coordinate Zn(2+). The disordered stretch occupies residues 110 to 163; it reads GPRGGAPISPPAAEYGSGGRDSGEREDKGPQGPPRQGGRDNRQGGGHQGGPKGD. The segment covering 152–163 has biased composition (gly residues); it reads QGGGHQGGPKGD.

Belongs to the eukaryotic/archaeal RNase P protein component 4 family. Consists of a catalytic RNA component and at least 4-5 protein subunits. It depends on Zn(2+) as a cofactor.

The protein resides in the cytoplasm. It catalyses the reaction Endonucleolytic cleavage of RNA, removing 5'-extranucleotides from tRNA precursor.. Functionally, part of ribonuclease P, a protein complex that generates mature tRNA molecules by cleaving their 5'-ends. The sequence is that of Ribonuclease P protein component 4 from Aeropyrum pernix (strain ATCC 700893 / DSM 11879 / JCM 9820 / NBRC 100138 / K1).